The chain runs to 26 residues: Metallothionein (26 aa).

Residues 1 to 14 (MGDCGCSGASSCNC) show a composition bias toward low complexity. The disordered stretch occupies residues 1 to 26 (MGDCGCSGASSCNCGSGCSCSNCGSK). Residues Cys4, Cys6, Cys12, Cys14, Cys18, Cys20, and Cys23 each contribute to the Cu(+) site. Over residues 15 to 26 (GSGCSCSNCGSK) the composition is skewed to cys residues.

This sequence belongs to the metallothionein superfamily. Type 8 family.

The polypeptide is Metallothionein (cmt) (Neurospora crassa (strain ATCC 24698 / 74-OR23-1A / CBS 708.71 / DSM 1257 / FGSC 987)).